A 424-amino-acid polypeptide reads, in one-letter code: Probable methyltransferase EP424R (424 aa).

One can recognise an Adrift-type SAM-dependent 2'-O-MTase domain in the interval 103 to 315 (QIVTNAWLKM…TYIVGKNRLR (213 aa)). Positions 135 and 228 each coordinate S-adenosyl-L-methionine. The Proton acceptor role is filled by lysine 268.

The protein localises to the virion. In Ornithodoros (relapsing fever ticks), this protein is Probable methyltransferase EP424R.